The primary structure comprises 550 residues: Zinc finger protein squeeze (550 aa).

Residues 73 to 105 show a composition bias toward low complexity; it reads QQQQQQQQQEMLQQQQQHQAHQEQQQQQQQQQQ. The interval 73-179 is disordered; it reads QQQQQQQQQE…GGGGGDGDQS (107 aa). The segment covering 106 to 117 has biased composition (basic residues); it reads QHHHQQQQHHLK. The span at 141 to 156 shows a compositional bias: polar residues; the sequence is RSPQRPLMSSGSNASS. Residues 164 to 176 are compositionally biased toward gly residues; that stretch reads SGGGPGGGGGGDG. 5 consecutive C2H2-type zinc fingers follow at residues 182-204, 210-232, 238-262, 268-290, and 299-321; these read YKCASCSKSFANSSYLSQHTRIH, YRCEICQRKFTQLSHLQQHIRTH, YKCRHAGCPKAFSQLSNLQSHSRCH, FKCNSCYKCFADEMTLLEHIPKH, and HICNLCGKSYTQETYLQKHLQKH. A disordered region spans residues 399-485; that stretch reads LQQHQQQQQQ…VPPSHLQQHR (87 aa). A compositionally biased stretch (low complexity) spans 400-416; that stretch reads QQHQQQQQQQQQDMLQQ. Residue threonine 424 is modified to Phosphothreonine. Phosphoserine is present on residues serine 428 and serine 430. Over residues 444-460 the composition is skewed to low complexity; that stretch reads QTTPQHHLQQQQQQQQP. Phosphotyrosine occurs at positions 494 and 496.

It belongs to the krueppel C2H2-type zinc-finger protein family. Interacts with nab; which acts as a coactivator. Interacts with ap.

The protein resides in the nucleus. Its function is as follows. Transcription factor involved in neuronal fate specification. First required in embryonic CNS development to define the number of cells that express apterous (ap) in the ap thoracic cluster of interneurons. Later on, it plays a central role in the combinatorial code of transcription factors that specifies the fate of the Tv neuron in the ap cluster by participating in the transcription regulation of FMRFa in Tv cells. Also required for projection neuron dendritic targeting. The chain is Zinc finger protein squeeze (sqz) from Drosophila pseudoobscura pseudoobscura (Fruit fly).